We begin with the raw amino-acid sequence, 346 residues long: Coproporphyrin III ferrochelatase (346 aa).

Fe-coproporphyrin III-binding residues include Ser52 and Tyr121. Fe(2+) is bound by residues His181 and Glu264.

This sequence belongs to the ferrochelatase family.

Its subcellular location is the cytoplasm. The catalysed reaction is Fe-coproporphyrin III + 2 H(+) = coproporphyrin III + Fe(2+). It participates in porphyrin-containing compound metabolism; protoheme biosynthesis. Its function is as follows. Involved in coproporphyrin-dependent heme b biosynthesis. Catalyzes the insertion of ferrous iron into coproporphyrin III to form Fe-coproporphyrin III. This is Coproporphyrin III ferrochelatase from Mycobacterium sp. (strain JLS).